A 351-amino-acid chain; its full sequence is Cardiolipin synthase (CMP-forming) (351 aa).

The segment at 74-120 is disordered; that stretch reads PAPQLSASHQHQAQQQQQQTKQPQQPYDPQQDQVPSTSTASSSKPAA. Positions 76 to 120 are enriched in low complexity; sequence PQLSASHQHQAQQQQQQTKQPQQPYDPQQDQVPSTSTASSSKPAA. Transmembrane regions (helical) follow at residues 139–159, 191–211, 251–271, 280–300, and 321–341; these read PLIG…ALAV, VLIG…GWVA, AAAA…GGGG, PLLI…GYLL, and LIMG…LAYG.

It belongs to the CDP-alcohol phosphatidyltransferase class-I family. Requires Mn(2+) as cofactor.

It is found in the mitochondrion inner membrane. It carries out the reaction a CDP-1,2-diacyl-sn-glycerol + a 1,2-diacyl-sn-glycero-3-phospho-(1'-sn-glycerol) = a cardiolipin + CMP + H(+). In terms of biological role, catalyzes the synthesis of cardiolipin (CL) (diphosphatidylglycerol) by specifically transferring a phosphatidyl group from CDP-diacylglycerol to phosphatidylglycerol (PG). CL is a key phospholipid in mitochondrial membranes and plays important roles in maintaining the functional integrity and dynamics of mitochondria under both optimal and stress conditions. Cannot catalyze the phosphatidyl group transfer from one PG molecule to another to form CL. The sequence is that of Cardiolipin synthase (CMP-forming) from Chlamydomonas reinhardtii (Chlamydomonas smithii).